A 343-amino-acid chain; its full sequence is Dihydroorotase (343 aa).

2 residues coordinate Zn(2+): His14 and His16. Substrate-binding positions include 16-18 (HVR) and Asn42. 3 residues coordinate Zn(2+): Lys98, His135, and His173. At Lys98 the chain carries N6-carboxylysine. His135 is a substrate binding site. Residue Leu219 coordinates substrate. Asp247 contributes to the Zn(2+) binding site. The active site involves Asp247. Residues His251 and Ala263 each contribute to the substrate site.

This sequence belongs to the metallo-dependent hydrolases superfamily. DHOase family. Class II DHOase subfamily. Homodimer. The cofactor is Zn(2+).

It carries out the reaction (S)-dihydroorotate + H2O = N-carbamoyl-L-aspartate + H(+). It functions in the pathway pyrimidine metabolism; UMP biosynthesis via de novo pathway; (S)-dihydroorotate from bicarbonate: step 3/3. Catalyzes the reversible cyclization of carbamoyl aspartate to dihydroorotate. The sequence is that of Dihydroorotase from Marinobacter nauticus (strain ATCC 700491 / DSM 11845 / VT8) (Marinobacter aquaeolei).